We begin with the raw amino-acid sequence, 101 residues long: MAKLALIEREKKRARLAAKFAPKRAELKAIIDDQSKSEEERYSARLELQQLPRNSNPTRKRNRCAITGRPRGTFRKFGLARNKIREIAFRGEIPGLTKASW.

This sequence belongs to the universal ribosomal protein uS14 family. In terms of assembly, part of the 30S ribosomal subunit. Contacts proteins S3 and S10.

Functionally, binds 16S rRNA, required for the assembly of 30S particles and may also be responsible for determining the conformation of the 16S rRNA at the A site. This Paraburkholderia phymatum (strain DSM 17167 / CIP 108236 / LMG 21445 / STM815) (Burkholderia phymatum) protein is Small ribosomal subunit protein uS14.